A 209-amino-acid polypeptide reads, in one-letter code: Thiamine-phosphate synthase (209 aa).

Residues 41–45 and Asn73 contribute to the 4-amino-2-methyl-5-(diphosphooxymethyl)pyrimidine site; that span reads QYRNK. 2 residues coordinate Mg(2+): Asp74 and Asp93. Ser112 is a binding site for 4-amino-2-methyl-5-(diphosphooxymethyl)pyrimidine. 139–141 provides a ligand contact to 2-[(2R,5Z)-2-carboxy-4-methylthiazol-5(2H)-ylidene]ethyl phosphate; it reads SST. Lys142 lines the 4-amino-2-methyl-5-(diphosphooxymethyl)pyrimidine pocket. A 2-[(2R,5Z)-2-carboxy-4-methylthiazol-5(2H)-ylidene]ethyl phosphate-binding site is contributed by Gly168.

This sequence belongs to the thiamine-phosphate synthase family. Mg(2+) is required as a cofactor.

The enzyme catalyses 2-[(2R,5Z)-2-carboxy-4-methylthiazol-5(2H)-ylidene]ethyl phosphate + 4-amino-2-methyl-5-(diphosphooxymethyl)pyrimidine + 2 H(+) = thiamine phosphate + CO2 + diphosphate. The catalysed reaction is 2-(2-carboxy-4-methylthiazol-5-yl)ethyl phosphate + 4-amino-2-methyl-5-(diphosphooxymethyl)pyrimidine + 2 H(+) = thiamine phosphate + CO2 + diphosphate. It catalyses the reaction 4-methyl-5-(2-phosphooxyethyl)-thiazole + 4-amino-2-methyl-5-(diphosphooxymethyl)pyrimidine + H(+) = thiamine phosphate + diphosphate. Its pathway is cofactor biosynthesis; thiamine diphosphate biosynthesis; thiamine phosphate from 4-amino-2-methyl-5-diphosphomethylpyrimidine and 4-methyl-5-(2-phosphoethyl)-thiazole: step 1/1. In terms of biological role, condenses 4-methyl-5-(beta-hydroxyethyl)thiazole monophosphate (THZ-P) and 2-methyl-4-amino-5-hydroxymethyl pyrimidine pyrophosphate (HMP-PP) to form thiamine monophosphate (TMP). The polypeptide is Thiamine-phosphate synthase (Methylobacillus flagellatus (strain ATCC 51484 / DSM 6875 / VKM B-1610 / KT)).